The sequence spans 346 residues: Nicotinate-nucleotide--dimethylbenzimidazole phosphoribosyltransferase (346 aa).

Glu312 (proton acceptor) is an active-site residue.

This sequence belongs to the CobT family.

The enzyme catalyses 5,6-dimethylbenzimidazole + nicotinate beta-D-ribonucleotide = alpha-ribazole 5'-phosphate + nicotinate + H(+). The protein operates within nucleoside biosynthesis; alpha-ribazole biosynthesis; alpha-ribazole from 5,6-dimethylbenzimidazole: step 1/2. Catalyzes the synthesis of alpha-ribazole-5'-phosphate from nicotinate mononucleotide (NAMN) and 5,6-dimethylbenzimidazole (DMB). In Cupriavidus necator (strain ATCC 17699 / DSM 428 / KCTC 22496 / NCIMB 10442 / H16 / Stanier 337) (Ralstonia eutropha), this protein is Nicotinate-nucleotide--dimethylbenzimidazole phosphoribosyltransferase.